We begin with the raw amino-acid sequence, 551 residues long: Steroid transmembrane transporter SLC22A24 (551 aa).

A run of 12 helical transmembrane segments spans residues 16 to 36 (FQIL…PHTV), 146 to 166 (SVAK…GGHL), 174 to 194 (FIVT…AFAP), 204 to 222 (FLTG…LLIL), 235 to 255 (ALIF…AFGI), 260 to 280 (HLQL…RWLS), 350 to 370 (ICLL…LLIN), 378 to 398 (VFLL…LGNF), 410 to 430 (IIFM…TQEM), 435 to 455 (LVLA…TAVL), 469 to 489 (LGVI…LMIL), and 496 to 516 (LPWI…LLLP). The tract at residues 524–551 (PDSIQDVENKRKSSREVKKDAVAKVTPF) is disordered. The segment covering 530 to 545 (VENKRKSSREVKKDAV) has biased composition (basic and acidic residues).

As to expression, localized to the kidney. Mainly expressed in the late segments of proximal tubules.

It is found in the cell membrane. The catalysed reaction is estrone 3-sulfate(out) + glutarate(in) = estrone 3-sulfate(in) + glutarate(out). It carries out the reaction 17beta-estradiol 17-O-(beta-D-glucuronate)(out) + glutarate(in) = 17beta-estradiol 17-O-(beta-D-glucuronate)(in) + glutarate(out). It catalyses the reaction dehydroepiandrosterone 3-sulfate(out) + glutarate(in) = dehydroepiandrosterone 3-sulfate(in) + glutarate(out). In terms of biological role, renal transmembrane organic anion/dicarboxylate exchanger that participates in the reabsorption of conjugated steroids, as well as bile acids, driven by an outward gradient of dicarboxylates such as glutarate or succinate. Transports estrone 3-sulfate and estradiol-17-glucuronide (17beta-estradiol 17-O-(beta-D-glucuronate)), but not androstanediol glucuronide (5alpha-androstane-3alpha,17beta-diol 3-O-(beta-D-glucuronate)), nor taurocholate. Prefers sulfate conjugates of steroids rather than glucuronide conjugates. This Rattus norvegicus (Rat) protein is Steroid transmembrane transporter SLC22A24.